A 305-amino-acid polypeptide reads, in one-letter code: Leucine-rich repeat-containing protein 25 (305 aa).

Positions 1–20 (MGGTLAWTLLLPLLLRESDS) are cleaved as a signal peptide. The Extracellular segment spans residues 21–165 (LEPSCTVSSA…SCAPGLASAT (145 aa)). LRR repeat units lie at residues 39–59 (SATC…QSLR), 62–83 (NVIL…FFAH), and 86–107 (KLEV…LAAR). 2 N-linked (GlcNAc...) asparagine glycosylation sites follow: Asn44 and Asn55. N-linked (GlcNAc...) asparagine glycans are attached at residues Asn130 and Asn148. A helical transmembrane segment spans residues 166-186 (IGAVVVSGCLLLGLAIAGPVL). Topologically, residues 187 to 305 (AWRLWRCRVA…DEEEYVIPGH (119 aa)) are cytoplasmic. Residues 204 to 229 (PWAAQDGPKPGLGLQPRYGSRSAPKP) form a disordered region. Tyr284 is subject to Phosphotyrosine.

In terms of assembly, interacts with RIGI. Interacts with SQSTM1. Interacts with p65/RELA; this interaction promotes the degradation of RELA through autophagy. Expressed in plasmacytoid dendritic cells (PDC), monocyte-derived dendritic cells (MDDC), granulocytes, monocytes, B-lymphocytes, peripheral blood leukocytes, spleen, bone marrow, and, to a lesser extent, lymph nodes, fetal liver, and appendix but not in thymus.

Its subcellular location is the membrane. It is found in the cytoplasm. In terms of biological role, plays a role in the inhibition of RLR-mediated type I interferon signaling pathway by targeting RIGI for autophagic degradation. Interacts specifically with ISG15-associated RIGI to promote interaction between RIGI and the autophagic cargo receptor p62/SQSTM1 to mediate RIGI degradation via selective autophagy. Also plays a role in the inhibition of NF-kappa-B signaling pathway and inflammatory response by promoting the degradation of p65/RELA. In Homo sapiens (Human), this protein is Leucine-rich repeat-containing protein 25 (LRRC25).